The sequence spans 58 residues: Large ribosomal subunit protein uL30 (58 aa).

Belongs to the universal ribosomal protein uL30 family. In terms of assembly, part of the 50S ribosomal subunit.

This chain is Large ribosomal subunit protein uL30, found in Phocaeicola vulgatus (strain ATCC 8482 / DSM 1447 / JCM 5826 / CCUG 4940 / NBRC 14291 / NCTC 11154) (Bacteroides vulgatus).